The primary structure comprises 195 residues: Probable GTP-binding protein EngB (195 aa).

The EngB-type G domain occupies 22–194; the sequence is LKGEVAFVGR…LDLISTLLKE (173 aa). GTP is bound by residues 30-37, 56-60, 74-77, 141-144, and 173-175; these read GRSNVGKS, GKTRS, DLPG, TKMD, and TSS. Positions 37 and 58 each coordinate Mg(2+).

This sequence belongs to the TRAFAC class TrmE-Era-EngA-EngB-Septin-like GTPase superfamily. EngB GTPase family. It depends on Mg(2+) as a cofactor.

Necessary for normal cell division and for the maintenance of normal septation. The protein is Probable GTP-binding protein EngB of Thermotoga petrophila (strain ATCC BAA-488 / DSM 13995 / JCM 10881 / RKU-1).